The chain runs to 364 residues: MEHNTDTVYNFSAGPAALPKAVMLQAQAEFVNWNHLGTSVMEISHRSQPFIQVAEHAERDLRDLLNIPDNYKVLFCQGGARAQFAAVPLNLLGDAETATYIDAGYWAMSAVKEAKKYCTVDVFDAKIEKEGKIAVLPASEWRIANNAAYVHFCPNETIDGIEINDLPVTDKPIVADMSSTILSREIDVSKYGVIYAGAQKNIGPAGICIAIVRDDLLDLASDLLPGVLNYKILAEQESMFNTPPTFAWYLSGLVFQWLKAQGGVKAIEEVNRAKAALLYGYIDSSDFYRNEIHPDNRSLMNVPFQLAKPELDDTFLELAEARGLVSLKGHRVVGGMRASIYNAMPLEGVQALVDFMKEFEAQYA.

R46 provides a ligand contact to L-glutamate. Residues 80–81 (AR), W106, T157, D176, and Q199 each bind pyridoxal 5'-phosphate. The residue at position 200 (K200) is an N6-(pyridoxal phosphate)lysine. 241-242 (NT) serves as a coordination point for pyridoxal 5'-phosphate.

The protein belongs to the class-V pyridoxal-phosphate-dependent aminotransferase family. SerC subfamily. As to quaternary structure, homodimer. The cofactor is pyridoxal 5'-phosphate.

The protein localises to the cytoplasm. It catalyses the reaction O-phospho-L-serine + 2-oxoglutarate = 3-phosphooxypyruvate + L-glutamate. It carries out the reaction 4-(phosphooxy)-L-threonine + 2-oxoglutarate = (R)-3-hydroxy-2-oxo-4-phosphooxybutanoate + L-glutamate. It functions in the pathway amino-acid biosynthesis; L-serine biosynthesis; L-serine from 3-phospho-D-glycerate: step 2/3. The protein operates within cofactor biosynthesis; pyridoxine 5'-phosphate biosynthesis; pyridoxine 5'-phosphate from D-erythrose 4-phosphate: step 3/5. Catalyzes the reversible conversion of 3-phosphohydroxypyruvate to phosphoserine and of 3-hydroxy-2-oxo-4-phosphonooxybutanoate to phosphohydroxythreonine. This chain is Phosphoserine aminotransferase, found in Vibrio cholerae serotype O1 (strain ATCC 39315 / El Tor Inaba N16961).